Here is a 36-residue protein sequence, read N- to C-terminus: Photosystem I reaction center subunit VIII (36 aa).

The helical transmembrane segment at 6-28 (LPSIFVPLVGLLFPAIAMVSLFF) threads the bilayer.

This sequence belongs to the PsaI family.

It is found in the plastid. The protein resides in the chloroplast thylakoid membrane. May help in the organization of the PsaL subunit. This is Photosystem I reaction center subunit VIII from Nymphaea alba (White water-lily).